Here is a 105-residue protein sequence, read N- to C-terminus: ATP synthase subunit c (105 aa).

Helical transmembrane passes span 3–23 (FLSL…GGMG), 32–52 (SILG…IGMG), and 78–98 (VAMA…IIAI).

This sequence belongs to the ATPase C chain family. As to quaternary structure, F-type ATPases have 2 components, F(1) - the catalytic core - and F(0) - the membrane proton channel. F(1) has five subunits: alpha(3), beta(3), gamma(1), delta(1), epsilon(1). F(0) has three main subunits: a(1), b(2) and c(10-14). The alpha and beta chains form an alternating ring which encloses part of the gamma chain. F(1) is attached to F(0) by a central stalk formed by the gamma and epsilon chains, while a peripheral stalk is formed by the delta and b chains.

It is found in the cell inner membrane. Functionally, f(1)F(0) ATP synthase produces ATP from ADP in the presence of a proton or sodium gradient. F-type ATPases consist of two structural domains, F(1) containing the extramembraneous catalytic core and F(0) containing the membrane proton channel, linked together by a central stalk and a peripheral stalk. During catalysis, ATP synthesis in the catalytic domain of F(1) is coupled via a rotary mechanism of the central stalk subunits to proton translocation. Its function is as follows. Key component of the F(0) channel; it plays a direct role in translocation across the membrane. A homomeric c-ring of between 10-14 subunits forms the central stalk rotor element with the F(1) delta and epsilon subunits. This chain is ATP synthase subunit c, found in Helicobacter pylori (strain Shi470).